A 455-amino-acid chain; its full sequence is Chromosomal replication initiator protein DnaA (455 aa).

The domain I, interacts with DnaA modulators stretch occupies residues 1–77 (MASLNENQKF…GFEVFGRMID (77 aa)). The interval 77-116 (DYELYANDELTELELHRLNNQSSIEEQPRSTAKPASPLVS) is domain II. The tract at residues 117–333 (GLNEKYNFEN…GALNRVEFVA (217 aa)) is domain III, AAA+ region. 4 residues coordinate ATP: Gly-161, Gly-163, Lys-164, and Thr-165. The segment at 334–455 (RANGIAVVDI…KDIDSIKRKF (122 aa)) is domain IV, binds dsDNA.

It belongs to the DnaA family. As to quaternary structure, oligomerizes as a right-handed, spiral filament on DNA at oriC.

It is found in the cytoplasm. Functionally, plays an essential role in the initiation and regulation of chromosomal replication. ATP-DnaA binds to the origin of replication (oriC) to initiate formation of the DNA replication initiation complex once per cell cycle. Binds the DnaA box (a 9 base pair repeat at the origin) and separates the double-stranded (ds)DNA. Forms a right-handed helical filament on oriC DNA; dsDNA binds to the exterior of the filament while single-stranded (ss)DNA is stabiized in the filament's interior. The ATP-DnaA-oriC complex binds and stabilizes one strand of the AT-rich DNA unwinding element (DUE), permitting loading of DNA polymerase. After initiation quickly degrades to an ADP-DnaA complex that is not apt for DNA replication. Binds acidic phospholipids. The chain is Chromosomal replication initiator protein DnaA from Lactococcus lactis subsp. lactis (strain IL1403) (Streptococcus lactis).